The primary structure comprises 188 residues: NADH-quinone oxidoreductase subunit B 1 (188 aa).

[4Fe-4S] cluster is bound by residues C39, C40, C105, and C134.

Belongs to the complex I 20 kDa subunit family. NDH-1 is composed of 14 different subunits. Subunits NuoB, C, D, E, F, and G constitute the peripheral sector of the complex. Requires [4Fe-4S] cluster as cofactor.

It localises to the cell inner membrane. The catalysed reaction is a quinone + NADH + 5 H(+)(in) = a quinol + NAD(+) + 4 H(+)(out). In terms of biological role, NDH-1 shuttles electrons from NADH, via FMN and iron-sulfur (Fe-S) centers, to quinones in the respiratory chain. The immediate electron acceptor for the enzyme in this species is believed to be ubiquinone. Couples the redox reaction to proton translocation (for every two electrons transferred, four hydrogen ions are translocated across the cytoplasmic membrane), and thus conserves the redox energy in a proton gradient. The chain is NADH-quinone oxidoreductase subunit B 1 from Solibacter usitatus (strain Ellin6076).